The chain runs to 394 residues: Protein-glutamate methylesterase/protein-glutamine glutaminase (394 aa).

The tract at residues 1 to 24 is disordered; the sequence is MSDGFGRPPPPAPAGHPTGAAGGD. The segment covering 15-24 has biased composition (low complexity); the sequence is GHPTGAAGGD. A Response regulatory domain is found at 27–145; it reads RVMVVDDSAV…EIGGADAFKR (119 aa). 4-aspartylphosphate is present on Asp-78. The CheB-type methylesterase domain maps to 191–393; sequence PAPAVGSVGQ…PYIRKFASRA (203 aa). Catalysis depends on residues Ser-211, His-238, and Asp-335.

This sequence belongs to the CheB family. In terms of processing, phosphorylated by CheA. Phosphorylation of the N-terminal regulatory domain activates the methylesterase activity.

It is found in the cytoplasm. The enzyme catalyses [protein]-L-glutamate 5-O-methyl ester + H2O = L-glutamyl-[protein] + methanol + H(+). It catalyses the reaction L-glutaminyl-[protein] + H2O = L-glutamyl-[protein] + NH4(+). Functionally, involved in chemotaxis. Part of a chemotaxis signal transduction system that modulates chemotaxis in response to various stimuli. Catalyzes the demethylation of specific methylglutamate residues introduced into the chemoreceptors (methyl-accepting chemotaxis proteins or MCP) by CheR. Also mediates the irreversible deamidation of specific glutamine residues to glutamic acid. This chain is Protein-glutamate methylesterase/protein-glutamine glutaminase, found in Azospirillum brasilense.